The following is a 293-amino-acid chain: MVDSVYRTRSLGVAAEGIPDQYADGEAARVWQLYIGDTRSRTAEYKAWLLGLLRQHGCHRVLDVACGTGVDSIMLVEEGFSVTSVDASDKMLKYALKERWNRRKEPAFDKWVIEEANWLTLDKDVPAGDGFDAVICLGNSFAHLPDSKGDQSEHRLALKNIASMVRPGGLLVIDHRNYDYILSTGCAPPGKNIYYKSDLTKDITTSVLTVNNKAHMVTLDYTVQVPGAGRDGAPGFSKFRLSYYPHCLASFTELVQEAFGGRCQHSVLGDFKPYRPGQAYVPCYFIHVLKKTG.

V2 carries the N-acetylvaline modification. Residues S4 and Y6 each contribute to the (6S)-5-methyl-5,6,7,8-tetrahydrofolate site. A Phosphoserine modification is found at S10. S-adenosyl-L-methionine is bound by residues Y22, W31, Y34, and R41. Residue Y34 is modified to Phosphotyrosine. The residue at position 46 (K46) is an N6-succinyllysine. S-adenosyl-L-methionine is bound by residues A65, 86–88 (DAS), 117–118 (NW), 137–140 (LGNS), and R176. Residues K191, K196, and K201 each carry the N6-succinyllysine modification. (6S)-5-methyl-5,6,7,8-tetrahydrofolate is bound at residue H215. Position 221 (Y221) interacts with S-adenosyl-L-methionine. R240 is a binding site for (6S)-5-methyl-5,6,7,8-tetrahydrofolate.

The protein belongs to the class I-like SAM-binding methyltransferase superfamily. Glycine N-methyltransferase family. As to quaternary structure, homotetramer. In terms of tissue distribution, abundant in liver.

Its subcellular location is the cytoplasm. The enzyme catalyses glycine + S-adenosyl-L-methionine = sarcosine + S-adenosyl-L-homocysteine + H(+). Its activity is regulated as follows. Inhibited by 5-methyltetrahydrofolate monoglutamate and by 5-methyltetrahydrofolate pentaglutamate, inhibition is much more effective by the pentaglutamate form than by the monoglutamate form. Two molecules of 5-methyltetrahydrofolate are bound per tetramer. The binding sites are localized between subunits. Inhibitor binding may preclude movements of the polypeptide chain that are necessary for enzyme activity. Catalyzes the methylation of glycine by using S-adenosylmethionine (AdoMet) to form N-methylglycine (sarcosine) with the concomitant production of S-adenosylhomocysteine (AdoHcy), a reaction regulated by the binding of 5-methyltetrahydrofolate. Possible crucial role in the regulation of tissue concentration of AdoMet and of metabolism of methionine. This Rattus norvegicus (Rat) protein is Glycine N-methyltransferase (Gnmt).